The following is a 175-amino-acid chain: Granulocyte colony-stimulating factor (175 aa).

Cystine bridges form between Cys-37/Cys-43 and Cys-65/Cys-75. Thr-134 is a glycosylation site (O-linked (GalNAc...) threonine).

It belongs to the IL-6 superfamily. In terms of assembly, monomer. Post-translationally, O-glycosylated.

The protein resides in the secreted. Its function is as follows. Granulocyte/macrophage colony-stimulating factors are cytokines that act in hematopoiesis by controlling the production, differentiation, and function of 2 related white cell populations of the blood, the granulocytes and the monocytes-macrophages. This CSF induces granulocytes. The protein is Granulocyte colony-stimulating factor (CSF3) of Canis lupus familiaris (Dog).